A 1429-amino-acid chain; its full sequence is MVTQVLIAHTGQRLEIDSRTITSLNGLKESVASQTSIPVECLIALTPQGRSLRWQPTQPETEIYIYDSRLTQRSQPGASSPPLSELPLPRYNAHTPPNSIEDTRSIPAWQKLFETRRAWAIDVVEDCARMDAATRERYAEMDVMLRCLDAAVANLENAVKGLENKYVELKEWSTSAQAEYSALATGFDRYLSLARGIAISSSMARFMTSRDDGGWKGRPQRQSTLEDLVDLELARQAGKLAPSALRKFKDRITNLDKAATHLFQDADTLMHKFETTMSRSALSHDGESLHLLKDIEALANKIDNDYNVTLEYTSSTRDTLLQVSKTAAHHTERLLPSIQKRALEMGDILCYATKARNSLAAESIEFMRSITEITSDSHSVKSQISETGQEDELATFDHLRLIQQIPYLYASFVAEAIRRREWLDKVKQDSTTLANEMAIFHEEEAKRRRRWHKSIGAVFGPAPTADSKVPNLEINLRGDDGEWPLMTRKDLDDFFNALRNQKADPELVVEIEKLIADMDKSTRQQSRRMKAFKNGSVHETALGRSGLLVRGDDDLLRSLQADKTRLESKLKTAESRVRRLEDLLHRQTQASRPNVGNLFQNPSQQVLDRNDSISSLRNPRAVDDRSRSLDGLETLIHRTQQLETELNTERERCVVLEREINALTTLHNDLKGQMDEANSTKKDLLQNMEALKREFTEERKSLEEEVKQLKARLEYTEDEIEHFGESRENEKASYDEKVHFLELEVERLTRERRDDSLKADDQVVLLQNEARLQRERIAAQDIELRAAQDEIRVLSKRLEAVTEDKQKYRQALEDIWECLAPADDVPTELPDLLEGITGKAADILNTKQGVEGDMSLMKLNVDTLQNNIRTLRSEMDFTKDRLTEEESVSLRLREKFSEERAKVVAMEGELAHGREQLHEFRVKIADGETGSEYMRKRLEDEEQNLASMTEELAAGQTQVQKMEEEVTRFKAKLHQTQMQLSELSIRLESRTECAKDLTQLLWSQNDRLTRLLERLGFSISREEDGTMHIQRTPRSERSLATTANPNDSDPSSSLRRSSTLNARPVTDNADLELLQWMSSATPEAEVEKYKIFMGLIGSLDMDVFADAVYRRVKDVEHMARKLQREARAYREKAHSFQKEAHDKIAFKHFKEGDLALFLPTRNQSTGAWAAFNVGFPHYFLREQDSHRLRNREWLVARIMRIQERVVDLSKSLQHDQAGETRKDGARGETESLDDDENDNPFDLSDGLRWYLIEAVEDKPGAPSTPGLAKSTVAANNVEAMADMRTQGHISKARGLTGRGGTPLGIEGVSKTLSKSLESRRSSTGSRKTLPFVIGASSRGRESALASETNSLRAVPADNNSSAPTNAAQQHMSPTDKLKDESLQETPQQTNSISAEGESMTIAARNDQAILQPSQTHSEVRNEIESLIGP.

Positions 71-99 (TQRSQPGASSPPLSELPLPRYNAHTPPNS) are disordered. Over residues 80 to 89 (SPPLSELPLP) the composition is skewed to low complexity. 4 coiled-coil regions span residues 143–173 (VMLRCLDAAVANLENAVKGLENKYVELKEWS), 553–590 (DDLLRSLQADKTRLESKLKTAESRVRRLEDLLHRQTQA), 632–815 (LETL…LEDI), and 851–989 (EGDM…RLES). The interval 1024-1061 (DGTMHIQRTPRSERSLATTANPNDSDPSSSLRRSSTLN) is disordered. Over residues 1042–1061 (TANPNDSDPSSSLRRSSTLN) the composition is skewed to low complexity. Residues 1105–1143 (ADAVYRRVKDVEHMARKLQREARAYREKAHSFQKEAHDK) are a coiled coil. The segment covering 1209–1229 (SKSLQHDQAGETRKDGARGET) has biased composition (basic and acidic residues). 2 disordered regions span residues 1209–1241 (SKSLQHDQAGETRKDGARGETESLDDDENDNPF) and 1336–1429 (SSRG…LIGP). Residues 1230-1239 (ESLDDDENDN) show a composition bias toward acidic residues. 2 stretches are compositionally biased toward polar residues: residues 1345–1372 (ASETNSLRAVPADNNSSAPTNAAQQHMS) and 1383–1393 (QETPQQTNSIS).

The protein belongs to the ATG11 family. As to quaternary structure, homodimer.

The protein localises to the preautophagosomal structure membrane. It is found in the vacuole membrane. Involved in cytoplasm to vacuole transport (Cvt), pexophagy, mitophagy and nucleophagy. Recruits mitochondria for their selective degradation via autophagy (mitophagy) during starvation. Works as scaffold proteins that recruit ATG proteins to the pre-autophagosome (PAS), the site of vesicle/autophagosome formation. Required for the Cvt vesicles completion. The sequence is that of Autophagy-related protein 11 (apg-8) from Neurospora crassa (strain ATCC 24698 / 74-OR23-1A / CBS 708.71 / DSM 1257 / FGSC 987).